A 397-amino-acid chain; its full sequence is Homocysteine-responsive endoplasmic reticulum-resident ubiquitin-like domain member 2 protein (397 aa).

A Ubiquitin-like domain is found at 10–89; that stretch reads VTLVIKAPNQ…HMVHLVCASR (80 aa). Disordered regions lie at residues 87-166 and 210-246; these read ASRS…MQGG and APSPSLSAGPATQPVQPNEPAAPMGPNPAPEDRPANP. Low complexity-rich tracts occupy residues 88–123 and 210–220; these read SRSPPSSPTSDSHFSTTDSSSSTSDSAGPSLSSTPS and APSPSLSAGPA. A helical transmembrane segment spans residues 293 to 313; sequence FVMVIGAMLLVYLHQAGWFPF. The segment at 344–373 is disordered; that stretch reads DEGIEDDEGDSGEEGPDDPMNPGPHQPGFL. Residues 345–360 are compositionally biased toward acidic residues; sequence EGIEDDEGDSGEEGPD.

Its subcellular location is the membrane. Its function is as follows. Could be involved in the unfolded protein response (UPR) pathway. This is Homocysteine-responsive endoplasmic reticulum-resident ubiquitin-like domain member 2 protein (herpud2) from Danio rerio (Zebrafish).